A 121-amino-acid chain; its full sequence is Large ribosomal subunit protein bL19 (121 aa).

It belongs to the bacterial ribosomal protein bL19 family.

This protein is located at the 30S-50S ribosomal subunit interface and may play a role in the structure and function of the aminoacyl-tRNA binding site. In Chlamydia muridarum (strain MoPn / Nigg), this protein is Large ribosomal subunit protein bL19 (rplS).